We begin with the raw amino-acid sequence, 481 residues long: Sucrose phosphorylase (481 aa).

Residues Asp-49, His-87, 191 to 193 (RLD), Glu-234, 291 to 292 (HD), 335 to 338 (DIYQ), and Arg-392 each bind sucrose. Asp-193 acts as the Nucleophile in catalysis. Glu-234 (proton donor) is an active-site residue.

It belongs to the glycosyl hydrolase 13 family. Sucrose phosphorylase subfamily.

It is found in the cytoplasm. The catalysed reaction is sucrose + phosphate = D-fructose + alpha-D-glucose 1-phosphate. Intracellular catabolism of sucrose. Being intracellular, probably not involved in synthesis of extracellular polysaccharides. This is Sucrose phosphorylase from Streptococcus mutans serotype c (strain ATCC 700610 / UA159).